The following is a 534-amino-acid chain: Cytokinin dehydrogenase 1 (534 aa).

An N-terminal signal peptide occupies residues 1 to 18; the sequence is MAVVYYLLLAGLIACSHA. 3 N-linked (GlcNAc...) asparagine glycosylation sites follow: Asn52, Asn63, and Asn89. An FAD-binding PCMH-type domain is found at 65–245; that stretch reads TSALPAAVLY…TRARIAVEPA (181 aa). Residues Phe100, Gly102, Arg103, and Gly104 each coordinate FAD. His105 carries the pros-8alpha-FAD histidine modification. Ser106 and Gln110 together coordinate FAD. N-linked (GlcNAc...) asparagine glycosylation occurs at Asn134. FAD-binding residues include Asp169, Thr174, Ser180, Ile184, and Ile235. N(6)-dimethylallyladenine is bound at residue Asp169. Asp169 provides a ligand contact to trans-zeatin. Residues Asn294, Asn323, and Asn338 are each glycosylated (N-linked (GlcNAc...) asparagine). Glu381 serves as a coordination point for N(6)-dimethylallyladenine. Glu381 contacts trans-zeatin. Residue Asn434 is glycosylated (N-linked (GlcNAc...) asparagine). Position 456 (Ser456) interacts with trans-zeatin. Residues Tyr491, Ser527, and Gln530 each contribute to the FAD site.

The protein belongs to the oxygen-dependent FAD-linked oxidoreductase family. As to quaternary structure, monomer. Requires FAD as cofactor. Glycosylated; with approximately 10 hexose residues per site. In terms of tissue distribution, expressed in immature kernels and unpollinated cobs. Weakly expressed in kernels harvested two weeks after anthesis.

It is found in the secreted. It localises to the extracellular space. It carries out the reaction N(6)-dimethylallyladenine + A + H2O = 3-methyl-2-butenal + adenine + AH2. Competitive inhibition by phenylureas. Catalyzes the oxidation of cytokinins, a family of N(6)-substituted adenine derivatives that are plant hormones, where the substituent is an isopentenyl group. Cleaves trans-zeatin, N(6)-dimethylallyladenine (isopentenyladenine), isopentenyladenosine, zeatin riboside and cis-zeatin, but not dihydrozeatin, kinetin and benzylaminopurine. This is Cytokinin dehydrogenase 1 (CKX1) from Zea mays (Maize).